A 527-amino-acid chain; its full sequence is MAAAAAPAVAVNGGVKVASQAYLESKAVKETRVLISDLCRQFYNLGWVSGTGGSITIKVHDDSIPKPNQLILMSPSGVQKERMEPEDMYVLAANGSILSSPSPKPYPHKPPKCSDCGPLFLKAYEMCNAGAVIHSHGMESCLVTMINPLSKEFKITHMEMIKGIKGHGYYDELVVPIIENTAYENELTDSLAKAIEEYPKTTAVLVRNHGIYIWGDSWISAKTQAECYHYLFDAAIKLHQLGLDWSTPNHGLIQNVKALIGSNRDINTSVKAGLKDSNHGMQSLPGCIVLDIEGTTTPITFVADVLFPYARDNVGRHLYATYETAETQDDIKLLRTQVEDDLARGVNEAVSIPPDDAGKEEVIAALVANVEAMIKADRKITALKQLQGHIWRTGFQNNELEGVVYDDVPEALEKWHALGIKVYIYSSGSRLAQRLIFGKTNYGDLRKYLSGFFDTTVGNKRETRSYIEISESVGVDRPSEILFVTDVVQEAVAAKGAGLEAVISIRQGNAPLPENHGFKTINSLSEI.

The segment at 1-244 (MAAAAAPAVA…AIKLHQLGLD (244 aa)) is methylthioribulose-1-phosphate dehydratase. Residue Cys116 coordinates substrate. Zn(2+) is bound by residues His134 and His136. The Proton donor/acceptor; for methylthioribulose-1-phosphate dehydratase activity role is filled by Glu159. His209 is a binding site for Zn(2+). Positions 288–527 (IVLDIEGTTT…FKTINSLSEI (240 aa)) are enolase-phosphatase E1. The Mg(2+) site is built by Asp291 and Glu293. Substrate is bound by residues 426 to 427 (SS) and Lys460. Position 486 (Asp486) interacts with Mg(2+).

In the N-terminal section; belongs to the aldolase class II family. MtnB subfamily. The protein in the C-terminal section; belongs to the HAD-like hydrolase superfamily. MasA/MtnC family. Requires Zn(2+) as cofactor. Mg(2+) serves as cofactor.

The catalysed reaction is 5-(methylsulfanyl)-D-ribulose 1-phosphate = 5-methylsulfanyl-2,3-dioxopentyl phosphate + H2O. It carries out the reaction 5-methylsulfanyl-2,3-dioxopentyl phosphate + H2O = 1,2-dihydroxy-5-(methylsulfanyl)pent-1-en-3-one + phosphate. Its pathway is amino-acid biosynthesis; L-methionine biosynthesis via salvage pathway; L-methionine from S-methyl-5-thio-alpha-D-ribose 1-phosphate: step 2/6. It participates in amino-acid biosynthesis; L-methionine biosynthesis via salvage pathway; L-methionine from S-methyl-5-thio-alpha-D-ribose 1-phosphate: step 3/6. It functions in the pathway amino-acid biosynthesis; L-methionine biosynthesis via salvage pathway; L-methionine from S-methyl-5-thio-alpha-D-ribose 1-phosphate: step 4/6. The chain is Probable bifunctional methylthioribulose-1-phosphate dehydratase/enolase-phosphatase E1 from Ricinus communis (Castor bean).